The following is a 974-amino-acid chain: Exocyst complex component 4 (974 aa).

Ala2 is subject to N-acetylalanine. Lys9 bears the N6-acetyllysine mark. Ser32 and Ser226 each carry phosphoserine. The stretch at 32 to 114 (STSDDVEDRE…HCKRDELRKL (83 aa)) forms a coiled coil. A phosphothreonine mark is found at Thr233 and Thr237. Ser468 carries the post-translational modification Phosphoserine.

Belongs to the SEC8 family. In terms of assembly, the exocyst complex is composed of EXOC1, EXOC2, EXOC3, EXOC4, EXOC5, EXOC6, EXOC7 and EXOC8. Interacts with BIRC6/bruce. Interacts with MYRIP. Interacts with SH3BP1; required for the localization of both SH3BP1 and the exocyst to the leading edge of migrating cells. Interacts with SLC6A9.

It localises to the midbody. The protein resides in the midbody ring. It is found in the cell projection. Its subcellular location is the cytoplasm. The protein localises to the cytoskeleton. It localises to the microtubule organizing center. The protein resides in the centrosome. Its function is as follows. Component of the exocyst complex involved in the docking of exocytic vesicles with fusion sites on the plasma membrane. The sequence is that of Exocyst complex component 4 (EXOC4) from Homo sapiens (Human).